We begin with the raw amino-acid sequence, 189 residues long: Cytochrome bo(3) ubiquinol oxidase subunit 3 (189 aa).

The Cytoplasmic segment spans residues 1 to 10 (MIKETMRNNK). Residues 11–31 (LFGLWIYLMSDCIIFAVLFAV) form a helical membrane-spanning segment. The Extracellular portion of the chain corresponds to 32–52 (YAIISSNFSTNLINHKIFNLS). Residues 53 to 73 (YVFLETLILLLSSLSSGMLTI) traverse the membrane as a helical segment. Residues 74 to 81 (QKNKNNIK) are Cytoplasmic-facing. Residues 82 to 102 (IIYFYLLLTFFLGLSFLLMEV) traverse the membrane as a helical segment. The Extracellular portion of the chain corresponds to 103-122 (NEFYKLILENCSPSQHAFFS). A helical transmembrane segment spans residues 123–143 (IFFTIVGVHGIHVFFGLIFIL). Topologically, residues 144 to 161 (SILYQLFYLGITNTIRIR) are cytoplasmic. Residues 162–182 (ILCFSLFWHFLDIIWICVFTF) form a helical membrane-spanning segment. The Extracellular segment spans residues 183 to 189 (VYLNGVI).

It belongs to the cytochrome c oxidase subunit 3 family. In terms of assembly, heterooctamer of two A chains, two B chains, two C chains and two D chains.

The protein localises to the cell membrane. Cytochrome bo(3) ubiquinol terminal oxidase is the component of the aerobic respiratory chain of E.coli that predominates when cells are grown at high aeration. Has proton pump activity across the membrane in addition to electron transfer, pumping 2 protons/electron. This chain is Cytochrome bo(3) ubiquinol oxidase subunit 3 (cyoC), found in Buchnera aphidicola subsp. Schizaphis graminum (strain Sg).